The chain runs to 588 residues: Proteasome-associated ATPase (588 aa).

Residues 1–10 (MAAHDDDINR) show a composition bias toward basic and acidic residues. Positions 1–22 (MAAHDDDINRGTRPARGSEDPA) are disordered. A coiled-coil region spans residues 47 to 94 (RILEERIVELQTNLAGVSAQNERLANTLREARDQIVALKEEVDRLAQP). 276 to 281 (GCGKTL) is a binding site for ATP. The tract at residues 587–588 (YL) is docks into pockets in the proteasome alpha-ring.

It belongs to the AAA ATPase family. As to quaternary structure, homohexamer. Assembles into a hexameric ring structure that caps the 20S proteasome core. Strongly interacts with the prokaryotic ubiquitin-like protein Pup through a hydrophobic interface; the interacting region of ARC lies in its N-terminal coiled-coil domain. There is one Pup binding site per ARC hexamer ring. Upon ATP-binding, the C-terminus of ARC interacts with the alpha-rings of the proteasome core, possibly by binding to the intersubunit pockets.

It functions in the pathway protein degradation; proteasomal Pup-dependent pathway. Its function is as follows. ATPase which is responsible for recognizing, binding, unfolding and translocation of pupylated proteins into the bacterial 20S proteasome core particle. May be essential for opening the gate of the 20S proteasome via an interaction with its C-terminus, thereby allowing substrate entry and access to the site of proteolysis. Thus, the C-termini of the proteasomal ATPase may function like a 'key in a lock' to induce gate opening and therefore regulate proteolysis. The sequence is that of Proteasome-associated ATPase from Streptomyces griseus subsp. griseus (strain JCM 4626 / CBS 651.72 / NBRC 13350 / KCC S-0626 / ISP 5235).